We begin with the raw amino-acid sequence, 325 residues long: NADH-quinone oxidoreductase subunit H (325 aa).

Helical transmembrane passes span 11 to 31 (ILLT…CGAF), 81 to 101 (FIFT…FAIV), 114 to 134 (IGIL…LFAG), 154 to 174 (VSYE…AGSF), 186 to 206 (MWNI…GVAV), 237 to 257 (FFVG…TLFF), 265 to 285 (LPSF…FILI), and 304 to 324 (ICLP…LYNA).

It belongs to the complex I subunit 1 family. As to quaternary structure, NDH-1 is composed of 13 different subunits. Subunits NuoA, H, J, K, L, M, N constitute the membrane sector of the complex.

It is found in the cell inner membrane. It catalyses the reaction a quinone + NADH + 5 H(+)(in) = a quinol + NAD(+) + 4 H(+)(out). Its function is as follows. NDH-1 shuttles electrons from NADH, via FMN and iron-sulfur (Fe-S) centers, to quinones in the respiratory chain. The immediate electron acceptor for the enzyme in this species is believed to be ubiquinone. Couples the redox reaction to proton translocation (for every two electrons transferred, four hydrogen ions are translocated across the cytoplasmic membrane), and thus conserves the redox energy in a proton gradient. This subunit may bind ubiquinone. The chain is NADH-quinone oxidoreductase subunit H from Proteus mirabilis (strain HI4320).